A 154-amino-acid chain; its full sequence is Ribonuclease H (154 aa).

An RNase H type-1 domain is found at 5–146 (EQNIVYLYCD…ADELANRGID (142 aa)). Mg(2+) is bound by residues aspartate 14, glutamate 52, aspartate 74, and aspartate 138.

Belongs to the RNase H family. In terms of assembly, monomer. The cofactor is Mg(2+).

It localises to the cytoplasm. The catalysed reaction is Endonucleolytic cleavage to 5'-phosphomonoester.. Endonuclease that specifically degrades the RNA of RNA-DNA hybrids. The sequence is that of Ribonuclease H from Coxiella burnetii (strain RSA 331 / Henzerling II).